The chain runs to 285 residues: ATP phosphoribosyltransferase (285 aa).

The protein belongs to the ATP phosphoribosyltransferase family. Long subfamily. Requires Mg(2+) as cofactor.

It is found in the cytoplasm. It catalyses the reaction 1-(5-phospho-beta-D-ribosyl)-ATP + diphosphate = 5-phospho-alpha-D-ribose 1-diphosphate + ATP. The protein operates within amino-acid biosynthesis; L-histidine biosynthesis; L-histidine from 5-phospho-alpha-D-ribose 1-diphosphate: step 1/9. Feedback inhibited by histidine. Catalyzes the condensation of ATP and 5-phosphoribose 1-diphosphate to form N'-(5'-phosphoribosyl)-ATP (PR-ATP). Has a crucial role in the pathway because the rate of histidine biosynthesis seems to be controlled primarily by regulation of HisG enzymatic activity. This chain is ATP phosphoribosyltransferase, found in Sulfolobus acidocaldarius (strain ATCC 33909 / DSM 639 / JCM 8929 / NBRC 15157 / NCIMB 11770).